The primary structure comprises 945 residues: Alanine--tRNA ligase (945 aa).

Histidine 564, histidine 568, cysteine 666, and histidine 670 together coordinate Zn(2+). The segment at 911 to 945 is disordered; that stretch reads SGGGRPDMAQAGGKDASKLPEALQQARETMTEKLG.

Belongs to the class-II aminoacyl-tRNA synthetase family. The cofactor is Zn(2+).

It localises to the cytoplasm. It carries out the reaction tRNA(Ala) + L-alanine + ATP = L-alanyl-tRNA(Ala) + AMP + diphosphate. Its function is as follows. Catalyzes the attachment of alanine to tRNA(Ala) in a two-step reaction: alanine is first activated by ATP to form Ala-AMP and then transferred to the acceptor end of tRNA(Ala). Also edits incorrectly charged Ser-tRNA(Ala) and Gly-tRNA(Ala) via its editing domain. The sequence is that of Alanine--tRNA ligase from Rhodopirellula baltica (strain DSM 10527 / NCIMB 13988 / SH1).